The sequence spans 419 residues: Serine--tRNA ligase (419 aa).

226 to 228 (TSE) is an L-serine binding site. ATP contacts are provided by residues 257–259 (RRE) and Val273. L-serine is bound at residue Glu280. 344 to 347 (ELTS) contributes to the ATP binding site. Thr379 serves as a coordination point for L-serine.

It belongs to the class-II aminoacyl-tRNA synthetase family. Type-1 seryl-tRNA synthetase subfamily. As to quaternary structure, homodimer. The tRNA molecule binds across the dimer.

It localises to the cytoplasm. The enzyme catalyses tRNA(Ser) + L-serine + ATP = L-seryl-tRNA(Ser) + AMP + diphosphate + H(+). The catalysed reaction is tRNA(Sec) + L-serine + ATP = L-seryl-tRNA(Sec) + AMP + diphosphate + H(+). It participates in aminoacyl-tRNA biosynthesis; selenocysteinyl-tRNA(Sec) biosynthesis; L-seryl-tRNA(Sec) from L-serine and tRNA(Sec): step 1/1. In terms of biological role, catalyzes the attachment of serine to tRNA(Ser). Is also able to aminoacylate tRNA(Sec) with serine, to form the misacylated tRNA L-seryl-tRNA(Sec), which will be further converted into selenocysteinyl-tRNA(Sec). The protein is Serine--tRNA ligase of Mycobacterium tuberculosis (strain CDC 1551 / Oshkosh).